A 600-amino-acid polypeptide reads, in one-letter code: NADPH-dependent diflavin oxidoreductase 1 (600 aa).

The region spanning 6 to 150 is the Flavodoxin-like domain; the sequence is LLILYGSQTG…VVDPWLKDLW (145 aa). Residues 12–17, 59–62, 97–106, and Asp132 contribute to the FMN site; these read SQTGTA, ATTG, and LGDSSYPKFN. Positions 210–449 constitute an FAD-binding FR-type domain; that stretch reads IHPFLAPVLS…WVKKGSMKFP (240 aa). Residues Arg354, 386-389, and 420-423 each bind FAD; these read RAFS and GLCS. NADP(+)-binding positions include Thr463, 518–519, and 524–528; these read SR and KIYVQ. Position 599 (Trp599) interacts with FAD.

It belongs to the NADPH-dependent diflavin oxidoreductase NDOR1 family. In the N-terminal section; belongs to the flavodoxin family. The protein in the C-terminal section; belongs to the flavoprotein pyridine nucleotide cytochrome reductase family. Interacts with ciapin1; as part of the cytosolic iron-sulfur (Fe-S) protein assembly (CIA) machinery. The cofactor is FAD. It depends on FMN as a cofactor.

The protein resides in the cytoplasm. It is found in the perinuclear region. It catalyses the reaction 2 oxidized [2Fe-2S]-[protein] + NADPH = 2 reduced [2Fe-2S]-[protein] + NADP(+) + H(+). NADPH-dependent reductase which is a central component of the cytosolic iron-sulfur (Fe-S) protein assembly (CIA) machinery. Transfers electrons from NADPH via its FAD and FMN prosthetic groups to the [2Fe-2S] cluster of ciapin1, another key component of the CIA machinery. In turn, this reduced cluster provides electrons for assembly of cytosolic iron-sulfur cluster proteins. It can also reduce the [2Fe-2S] cluster of cisd1 and activate this protein implicated in Fe/S cluster repair. The polypeptide is NADPH-dependent diflavin oxidoreductase 1 (Xenopus laevis (African clawed frog)).